The primary structure comprises 167 residues: Lipoprotein signal peptidase (167 aa).

A run of 4 helical transmembrane segments spans residues T8–L28, W46–F66, K70–I90, and I101–G121. Catalysis depends on residues D125 and D143. Residues F139 to F159 form a helical membrane-spanning segment.

The protein belongs to the peptidase A8 family.

The protein resides in the cell inner membrane. The catalysed reaction is Release of signal peptides from bacterial membrane prolipoproteins. Hydrolyzes -Xaa-Yaa-Zaa-|-(S,diacylglyceryl)Cys-, in which Xaa is hydrophobic (preferably Leu), and Yaa (Ala or Ser) and Zaa (Gly or Ala) have small, neutral side chains.. The protein operates within protein modification; lipoprotein biosynthesis (signal peptide cleavage). This protein specifically catalyzes the removal of signal peptides from prolipoproteins. The polypeptide is Lipoprotein signal peptidase (Chlamydia muridarum (strain MoPn / Nigg)).